Reading from the N-terminus, the 79-residue chain is UPF0154 protein SSP1415 (79 aa).

The chain crosses the membrane as a helical span at residues 4 to 24 (WLAIVLIVLALILGLVGGFFL).

Belongs to the UPF0154 family.

It localises to the membrane. The polypeptide is UPF0154 protein SSP1415 (Staphylococcus saprophyticus subsp. saprophyticus (strain ATCC 15305 / DSM 20229 / NCIMB 8711 / NCTC 7292 / S-41)).